The primary structure comprises 267 residues: Proteasome subunit alpha (267 aa).

The interval 231–267 (ETLLQERDSKESAESEEPKESEEGKKTGKKSDADSSD) is disordered. Residues 234–267 (LQERDSKESAESEEPKESEEGKKTGKKSDADSSD) show a composition bias toward basic and acidic residues.

This sequence belongs to the peptidase T1A family. As to quaternary structure, the 20S proteasome core is composed of 14 alpha and 14 beta subunits that assemble into four stacked heptameric rings, resulting in a barrel-shaped structure. The two inner rings, each composed of seven catalytic beta subunits, are sandwiched by two outer rings, each composed of seven alpha subunits. The catalytic chamber with the active sites is on the inside of the barrel. Has a gated structure, the ends of the cylinder being occluded by the N-termini of the alpha-subunits. Is capped by the proteasome-associated ATPase, ARC.

The protein resides in the cytoplasm. The protein operates within protein degradation; proteasomal Pup-dependent pathway. With respect to regulation, the formation of the proteasomal ATPase ARC-20S proteasome complex, likely via the docking of the C-termini of ARC into the intersubunit pockets in the alpha-rings, may trigger opening of the gate for substrate entry. Interconversion between the open-gate and close-gate conformations leads to a dynamic regulation of the 20S proteasome proteolysis activity. Component of the proteasome core, a large protease complex with broad specificity involved in protein degradation. The polypeptide is Proteasome subunit alpha (Mycobacterium marinum (strain ATCC BAA-535 / M)).